Consider the following 269-residue polypeptide: Adenosylcobinamide-GDP ribazoletransferase (269 aa).

Helical transmembrane passes span 8–28 (QFNL…PTAI), 41–61 (YFPL…CFML), 70–90 (VCLL…DGLA), 114–136 (IGTY…LSSL), and 196–216 (VPAV…SACV).

The protein belongs to the CobS family. It depends on Mg(2+) as a cofactor.

The protein resides in the cell inner membrane. It carries out the reaction alpha-ribazole + adenosylcob(III)inamide-GDP = adenosylcob(III)alamin + GMP + H(+). It catalyses the reaction alpha-ribazole 5'-phosphate + adenosylcob(III)inamide-GDP = adenosylcob(III)alamin 5'-phosphate + GMP + H(+). It participates in cofactor biosynthesis; adenosylcobalamin biosynthesis; adenosylcobalamin from cob(II)yrinate a,c-diamide: step 7/7. Its function is as follows. Joins adenosylcobinamide-GDP and alpha-ribazole to generate adenosylcobalamin (Ado-cobalamin). Also synthesizes adenosylcobalamin 5'-phosphate from adenosylcobinamide-GDP and alpha-ribazole 5'-phosphate. This Pseudoalteromonas atlantica (strain T6c / ATCC BAA-1087) protein is Adenosylcobinamide-GDP ribazoletransferase.